A 196-amino-acid chain; its full sequence is Holliday junction branch migration complex subunit RuvA (196 aa).

The segment at 1 to 63 (MLDFIKGEIV…EETHQLFGFI (63 aa)) is domain I. A domain II region spans residues 64–142 (DKKERQLFTH…PDNIPSSDTI (79 aa)). Residues 143–146 (ITNI) form a flexible linker region. Residues 146-196 (ISSNITKEAITALITLGFSQSASQKVVNKIVSNNSSSTTIEQIIKKALKLL) form a domain III region.

This sequence belongs to the RuvA family. As to quaternary structure, homotetramer. Forms an RuvA(8)-RuvB(12)-Holliday junction (HJ) complex. HJ DNA is sandwiched between 2 RuvA tetramers; dsDNA enters through RuvA and exits via RuvB. An RuvB hexamer assembles on each DNA strand where it exits the tetramer. Each RuvB hexamer is contacted by two RuvA subunits (via domain III) on 2 adjacent RuvB subunits; this complex drives branch migration. In the full resolvosome a probable DNA-RuvA(4)-RuvB(12)-RuvC(2) complex forms which resolves the HJ.

It localises to the cytoplasm. In terms of biological role, the RuvA-RuvB-RuvC complex processes Holliday junction (HJ) DNA during genetic recombination and DNA repair, while the RuvA-RuvB complex plays an important role in the rescue of blocked DNA replication forks via replication fork reversal (RFR). RuvA specifically binds to HJ cruciform DNA, conferring on it an open structure. The RuvB hexamer acts as an ATP-dependent pump, pulling dsDNA into and through the RuvAB complex. HJ branch migration allows RuvC to scan DNA until it finds its consensus sequence, where it cleaves and resolves the cruciform DNA. The polypeptide is Holliday junction branch migration complex subunit RuvA (Azobacteroides pseudotrichonymphae genomovar. CFP2).